The primary structure comprises 232 residues: MKELQTVLKNHFEIEFADKKLLETAFTHTSYANEHRLLKISHNERLEFLGDAVLQLLISEYLYKKYPKKPEGDLSKLRAMIVREESLAGFARDCQFDQFIKLGKGEEKSGGRNRDTILGDAFEAFLGALLLDKDVAKVKEFIYQVMIPKVEAGEFEMITDYKTHLQELLQVNGDVAIRYQVISETGPAHDKVFDVEVLVEGKSIGQGQGRSKKLAEQEAAKNAVEKGLDSCI.

The region spanning 5-134 is the RNase III domain; sequence QTVLKNHFEI…FLGALLLDKD (130 aa). Glutamate 47 provides a ligand contact to Mg(2+). The active site involves aspartate 51. 2 residues coordinate Mg(2+): aspartate 120 and glutamate 123. The active site involves glutamate 123. In terms of domain architecture, DRBM spans 160–229; that stretch reads DYKTHLQELL…AKNAVEKGLD (70 aa).

The protein belongs to the ribonuclease III family. Homodimer. It depends on Mg(2+) as a cofactor.

It localises to the cytoplasm. It carries out the reaction Endonucleolytic cleavage to 5'-phosphomonoester.. Digests double-stranded RNA. Involved in the processing of primary rRNA transcript to yield the immediate precursors to the large and small rRNAs (23S and 16S). Processes some mRNAs, and tRNAs when they are encoded in the rRNA operon. Processes pre-crRNA and tracrRNA of type II CRISPR loci if present in the organism. In Streptococcus pneumoniae (strain ATCC BAA-255 / R6), this protein is Ribonuclease 3.